The primary structure comprises 117 residues: Hainantoxin-XV-4 (117 aa).

Positions 1-20 are cleaved as a signal peptide; it reads MKLCAVIIASLLVCVAVASS. The interval 20 to 55 is disordered; it reads SSDNQKEFAQEKEMTREETQSLGEHEKDDEVTGSEE. Positions 21-56 are excised as a propeptide; that stretch reads SDNQKEFAQEKEMTREETQSLGEHEKDDEVTGSEER. A compositionally biased stretch (basic and acidic residues) spans 23–55; that stretch reads NQKEFAQEKEMTREETQSLGEHEKDDEVTGSEE. Intrachain disulfides connect C58–C72, C65–C78, C69–C115, and C71–C91.

This sequence belongs to the neurotoxin 03 (Tx2) family. 02 subfamily. HNTX-XV sub-subfamily. Expressed by the venom gland.

The protein resides in the secreted. Putative ion channel inhibitor. This is Hainantoxin-XV-4 from Cyriopagopus hainanus (Chinese bird spider).